The sequence spans 198 residues: Nucleoid occlusion factor SlmA (198 aa).

The region spanning 10–70 (NRREEILQSL…SLIEFIEDSL (61 aa)) is the HTH tetR-type domain. Positions 33 to 52 (TTAKLAASVGVSEAALYRHF) form a DNA-binding region, H-T-H motif. Positions 119-144 (DRLQGRINQLFERIEVQLRQVMREKK) form a coiled coil.

The protein belongs to the nucleoid occlusion factor SlmA family. As to quaternary structure, homodimer. Interacts with FtsZ.

It is found in the cytoplasm. The protein localises to the nucleoid. Functionally, required for nucleoid occlusion (NO) phenomenon, which prevents Z-ring formation and cell division over the nucleoid. Acts as a DNA-associated cell division inhibitor that binds simultaneously chromosomal DNA and FtsZ, and disrupts the assembly of FtsZ polymers. SlmA-DNA-binding sequences (SBS) are dispersed on non-Ter regions of the chromosome, preventing FtsZ polymerization at these regions. The sequence is that of Nucleoid occlusion factor SlmA from Klebsiella pneumoniae (strain 342).